The primary structure comprises 393 residues: Nuclear hormone receptor family member nhr-90 (393 aa).

Residues 6–79 constitute a DNA-binding region (nuclear receptor); that stretch reads LQTCKICGAE…AGMKIEYFQH (74 aa). The NR C4-type zinc-finger motif lies at 9–30; that stretch reads CKICGAENTRGNHFGVQCCRAC. The segment at 47–62 adopts an NR C4-type; degenerate zinc-finger fold; it reads CLSVHCGEAARFCKPC. One can recognise an NR LBD domain in the interval 121–388; it reads DLNSLVGKAS…FSHPEMFIDT (268 aa).

Belongs to the nuclear hormone receptor family.

The protein resides in the nucleus. In terms of biological role, orphan nuclear receptor. The sequence is that of Nuclear hormone receptor family member nhr-90 (nhr-90) from Caenorhabditis elegans.